The chain runs to 358 residues: MRKTVIVAMSGGVDSSVVAYLLKKQGEYNVVGLFMKNWGEQDENGECTATKDFRDVERIAEQLSIPYYTVSFSKEYKERVFSRFLREYANGYTPNPDVLCNREIKFDLLQKKVLELKGDFLATGHYCRGGADGTGLSRGIDPNKDQSYFLCGTPKDALSNVLFPLGGMYKTEVRRIAQEAGLATATKKDSTGICFIGKRPFKSFLEQFVADSPGDIIDFDTQQVVGRHEGAHYYTIGQRRGLNIGGMEKPCYVLSKNMEKNIVYIVRGEDHPLLYRQELLAKELNWFVPLQEPMICSAKVRYRSPDEKCSVYPLEDGTVKVIFDVPVKAVTPGQTVAFYQGDICLGGGVIEVPMIHQL.

ATP contacts are provided by residues 8–15 (AMSGGVDS) and Met35. The interaction with target base in tRNA stretch occupies residues 95 to 97 (NPD). Cys100 serves as the catalytic Nucleophile. Residues Cys100 and Cys194 are joined by a disulfide bond. Gly124 is an ATP binding site. Residues 144–146 (KDQ) form an interaction with tRNA region. The active-site Cysteine persulfide intermediate is Cys194. Positions 301–302 (RY) are interaction with tRNA.

It belongs to the MnmA/TRMU family.

It is found in the cytoplasm. The enzyme catalyses S-sulfanyl-L-cysteinyl-[protein] + uridine(34) in tRNA + AH2 + ATP = 2-thiouridine(34) in tRNA + L-cysteinyl-[protein] + A + AMP + diphosphate + H(+). Catalyzes the 2-thiolation of uridine at the wobble position (U34) of tRNA, leading to the formation of s(2)U34. In Chlamydia trachomatis serovar L2 (strain ATCC VR-902B / DSM 19102 / 434/Bu), this protein is tRNA-specific 2-thiouridylase MnmA.